A 787-amino-acid chain; its full sequence is Putative pentatricopeptide repeat-containing protein At1g69350, mitochondrial (787 aa).

The transit peptide at 1-16 (MTQYMPLFRSCSSLRL) directs the protein to the mitochondrion. PPR repeat units lie at residues 33–63 (DPLP…FPYP), 64–98 (DSFM…TTQI), 99–134 (SKFV…GVDD), 135–165 (DAVI…MPVR), 166–200 (DLVA…GVEP), 201–235 (DAVT…MFDL), 236–266 (DETL…IAKK), 267–301 (NAVS…GIEP), 302–336 (NLVT…ELDP), 338–368 (YESL…VSDR), 369–403 (NIVA…RIKP), 404–434 (DAFT…VIRT), 438–468 (DEFV…IKHR), 469–503 (SVVT…YLEM), 504–534 (NEVT…LIIS), 538–568 (DLFT…MSSR), 569–603 (SIVS…GTKP), 604–638 (NEVV…GVSP), and 639–669 (NSEH…MPFL). Residues 674-749 (VWGSLVNGCR…VPGYSAIEID (76 aa)) form a type E motif region. The tract at residues 750 to 780 (QKVFRFGAGEENRIQTDEIYRFLGNLQNLTN) is type E(+) motif.

Belongs to the PPR family. PCMP-E subfamily.

The protein localises to the mitochondrion. The chain is Putative pentatricopeptide repeat-containing protein At1g69350, mitochondrial (PCMP-E66) from Arabidopsis thaliana (Mouse-ear cress).